We begin with the raw amino-acid sequence, 430 residues long: Corticosteroid-binding globulin (430 aa).

The N-terminal stretch at 1-22 is a signal peptide; that stretch reads MLLTLYTCLLWLSTSGLWTIQA. Asparagine 119, asparagine 175, and asparagine 243 each carry an N-linked (GlcNAc...) asparagine glycan. Glutamine 253 lines the cortisol pocket. The N-linked (GlcNAc...) asparagine glycan is linked to asparagine 259. Glutamine 285 serves as a coordination point for cortisol. N-linked (GlcNAc...) asparagine glycosylation is present at asparagine 326. Residue tryptophan 392 coordinates cortisol.

Belongs to the serpin family. Expressed by the liver; secreted in plasma.

It localises to the secreted. In terms of biological role, major transport protein for glucocorticoids and progestins in the blood of almost all vertebrate species. This Ovis aries (Sheep) protein is Corticosteroid-binding globulin (SERPINA6).